A 634-amino-acid chain; its full sequence is Sodium-dependent multivitamin transporter (634 aa).

12 helical membrane-spanning segments follow: residues 23–43, 65–85, 100–120, 142–162, 175–195, 207–227, 255–275, 295–315, 350–370, 403–423, 427–447, and 455–475; these read FSVV…VIGL, MGCL…VAIL, FLGC…IPVF, ICGT…ALYA, LWLS…LGGL, LIMF…VGGL, FWTL…VNQA, AVFP…LVMF, LPGL…SSAF, FAYG…GSVL, LSIF…GMFF, and AIVG…GSIV. N-linked (GlcNAc...) asparagine glycans are attached at residues Asn-488 and Asn-497. Residues 526 to 546 traverse the membrane as a helical segment; sequence LWYSAHNSTTVIAVGLIVSLL.

Belongs to the sodium:solute symporter (SSF) (TC 2.A.21) family. Interacts with PDZD11. Expressed in the jejunum (at protein level). Expressed in lung, skeletal muscle, heart, brain, kidney, intestine, liver, and placenta.

It is found in the cell membrane. It localises to the apical cell membrane. It carries out the reaction biotin(out) + 2 Na(+)(out) = biotin(in) + 2 Na(+)(in). It catalyses the reaction (R)-pantothenate(out) + 2 Na(+)(out) = (R)-pantothenate(in) + 2 Na(+)(in). The enzyme catalyses (R)-lipoate(out) + 2 Na(+)(out) = (R)-lipoate(in) + 2 Na(+)(in). The catalysed reaction is iodide(out) + 2 Na(+)(out) = iodide(in) + 2 Na(+)(in). Its function is as follows. Sodium-dependent multivitamin transporter that mediates the electrogenic transport of pantothenate, biotin, lipoate and iodide. Functions as a Na(+)-coupled substrate symporter where the stoichiometry of Na(+):substrate is 2:1, creating an electrochemical Na(+) gradient used as driving force for substrate uptake. Required for biotin and pantothenate uptake in the intestine across the brush border membrane. Plays a role in the maintenance of intestinal mucosa integrity, by providing the gut mucosa with biotin. Contributes to the luminal uptake of biotin and pantothenate into the brain across the blood-brain barrier. In Rattus norvegicus (Rat), this protein is Sodium-dependent multivitamin transporter.